The sequence spans 398 residues: O-methyltransferase mpaG' (398 aa).

S144 is a (4E,8E)-10-(4,6-dihydroxy-7-methyl-3-oxo-1,3-dihydro-2-benzofuran-5-yl)-4,8-dimethyldeca-4,8-dienoate binding site. Residue S144 participates in 4-farnesyl-3,5-dihydroxy-6-methylphthalide binding. Residue S144 coordinates 6-O-desmethylmycophenolate. N197 contributes to the S-adenosyl-L-homocysteine binding site. Y199 provides a ligand contact to (4E,8E)-10-(4,6-dihydroxy-7-methyl-3-oxo-1,3-dihydro-2-benzofuran-5-yl)-4,8-dimethyldeca-4,8-dienoate. Y199 lines the 4-farnesyl-3,5-dihydroxy-6-methylphthalide pocket. Position 199 (Y199) interacts with 6-O-desmethylmycophenolate. Residues Y203, D237, G239, H244, D245, D264, and R265 each coordinate S-adenosyl-L-homocysteine. D264 is a binding site for S-adenosyl-L-methionine. Residues R265 and Q267 each contribute to the (4E,8E)-10-(4,6-dihydroxy-7-methyl-3-oxo-1,3-dihydro-2-benzofuran-5-yl)-4,8-dimethyldeca-4,8-dienoate site. 6-O-desmethylmycophenolate is bound at residue R265. S-adenosyl-L-homocysteine contacts are provided by D286, I287, and H302. Residue S303 coordinates (4E,8E)-10-(4,6-dihydroxy-7-methyl-3-oxo-1,3-dihydro-2-benzofuran-5-yl)-4,8-dimethyldeca-4,8-dienoate. Residue S303 participates in 4-farnesyl-3,5-dihydroxy-6-methylphthalide binding. Residue S303 participates in 6-O-desmethylmycophenolate binding. H306 functions as the Proton acceptor in the catalytic mechanism. Residues E335 and E362 contribute to the active site.

Belongs to the class I-like SAM-binding methyltransferase superfamily. Cation-independent O-methyltransferase family. In terms of assembly, homodimer.

The protein localises to the cytoplasm. It localises to the cytosol. The catalysed reaction is (4E,8E)-10-(4,6-dihydroxy-7-methyl-3-oxo-1,3-dihydro-2-benzofuran-5-yl)-4,8-dimethyldeca-4,8-dienoate + S-adenosyl-L-methionine = (4E,8E)-10-(4-hydroxy-6-methoxy-7-methyl-3-oxo-1,3-dihydro-2-benzofuran-5-yl)-4,8-dimethyldeca-4,8-dienoate + S-adenosyl-L-homocysteine + H(+). It catalyses the reaction 4-farnesyl-3,5-dihydroxy-6-methylphthalide + S-adenosyl-L-methionine = 4-farnesyl-3,5-dihydroxy-6-methoxylphthalide + S-adenosyl-L-homocysteine + H(+). It carries out the reaction 6-O-desmethylmycophenolate + S-adenosyl-L-methionine = mycophenolate + S-adenosyl-L-homocysteine + H(+). The protein operates within secondary metabolite biosynthesis; terpenoid biosynthesis. O-methyltransferase; part of the gene cluster that mediates the biosynthesis of mycophenolic acid (MPA), the first isolated antibiotic natural product in the world obtained from a culture of Penicillium brevicompactum in 1893. MpaG' catalyzes the 5-O-methylation of three precursors in MPA biosynthesis including demethylmycophenolic acid (DMMPA), 4-farnesyl-3,5-dihydroxy-6-methylphthalide (FDHMP), and an intermediate containing three fewer carbon atoms compared to FDHMP (FDHMP-3C) with different catalytic efficiencies. The first step of the pathway is the synthesis of 5-methylorsellinic acid (5MOA) by the cytosolic polyketide synthase mpaC. 5MOA is then converted to the phthalide compound 5,7-dihydroxy-4,6-dimethylphthalide (DHMP) by the endoplasmic reticulum-bound cytochrome P450 monooxygenase mpaDE. MpaDE first catalyzes hydroxylation of 5-MOA to 4,6-dihydroxy-2-(hydroxymethyl)-3-methylbenzoic acid (DHMB). MpaDE then acts as a lactone synthase that catalyzes the ring closure to convert DHMB into DHMP. The next step is the prenylation of DHMP by the Golgi apparatus-associated prenyltransferase mpaA to yield farnesyl-DHMP (FDHMP). The ER-bound oxygenase mpaB then mediates the oxidative cleavage the C19-C20 double bond in FDHMP to yield FDHMP-3C via a mycophenolic aldehyde intermediate. The O-methyltransferase mpaG catalyzes the methylation of FDHMP-3C to yield MFDHMP-3C. MpaG and mpaB can also switch the order in which they act and, in this case, the conversion of FDHMP to MFDHMP-3C can take place via 5-O-methyl-FDHMP (MFDHMP). After the cytosolic methylation of FDHMP-3C, MFDHMP-3C enters into peroxisomes probably via free diffusion due to its low molecular weight. Upon a peroxisomal CoA ligation reaction, catalyzed by a beta-oxidation component enzyme acyl-CoA ligase ACL891, MFDHMP-3C-CoA would then be restricted to peroxisomes for the following beta-oxidation pathway steps. The peroxisomal beta-oxidation machinery than converts MFDHMP-3C-CoA into MPA_CoA, via a beta-oxidation chain-shortening process. Finally mpaH acts as a peroxisomal acyl-CoA hydrolase with high substrate specificity toward MPA-CoA to release the final product MPA. MpaH can also hydrolyze DMMPA-CoA to release demethylmycophenolic acid (DMMPA) that is further converted to MPA by mpaG. The chain is O-methyltransferase mpaG' from Penicillium brevicompactum.